Here is a 165-residue protein sequence, read N- to C-terminus: S-(2-succino)cysteine N-acetyltransferase (165 aa).

In terms of domain architecture, N-acetyltransferase spans 3 to 162 (PRYRLAVERD…ITVYMKKQLR (160 aa)).

Belongs to the acetyltransferase family.

It carries out the reaction S-(2-succino)-L-cysteine + acetyl-CoA = N-acetyl-S-(2-succino)-L-cysteine + CoA + H(+). The protein operates within amino-acid biosynthesis; L-cysteine biosynthesis. Catalyzes the N-acetylation of S-(2-succino)cysteine. Is involved in a S-(2-succino)cysteine (2SC) degradation pathway that allows B.subtilis to grow on 2SC as a sole sulfur source, via its metabolization to cysteine. Moreover, 2SC is a toxic compound in B.subtilis at high exogenous concentrations, and this enzyme relieves 2SC toxicity via N-acetylation. In Bacillus subtilis (strain 168), this protein is S-(2-succino)cysteine N-acetyltransferase.